The primary structure comprises 459 residues: Mitochondrial distribution and morphology protein 34 (459 aa).

One can recognise an SMP-LTD domain in the interval 1 to 190; it reads MSFRFNEAVF…LPSLIFNTSQ (190 aa). Residues 338–347 are compositionally biased toward basic and acidic residues; it reads RSNSNDDNAK. The segment at 338 to 375 is disordered; it reads RSNSNDDNAKPRRRKIKCKKTRTPSNLQSQGEQAVDDS. The span at 348–359 shows a compositional bias: basic residues; the sequence is PRRRKIKCKKTR.

Belongs to the MDM34 family. Component of the ER-mitochondria encounter structure (ERMES) or MDM complex, composed of MMM1, MDM10, MDM12 and MDM34. Ubiquitinated by a SCF (SKP1-CUL1-F-box protein) E3 ubiquitin-protein ligase complex containing the F-box protein MDM30. Ubiquitination is important for mitochondrial integrity.

It is found in the mitochondrion outer membrane. Functionally, component of the ERMES/MDM complex, which serves as a molecular tether to connect the endoplasmic reticulum (ER) and mitochondria. Components of this complex are involved in the control of mitochondrial shape and protein biogenesis, and function in nonvesicular lipid trafficking between the ER and mitochondria. MDM34 is required for the interaction of the ER-resident membrane protein MMM1 and the outer mitochondrial membrane-resident beta-barrel protein MDM10. The polypeptide is Mitochondrial distribution and morphology protein 34 (Saccharomyces cerevisiae (strain YJM789) (Baker's yeast)).